The chain runs to 84 residues: Small ribosomal subunit protein eS27-like (84 aa).

Over residues 1–16 (MPLARDLLHPSLDEEK) the composition is skewed to basic and acidic residues. Residues 1-23 (MPLARDLLHPSLDEEKKKHKKKR) form a disordered region. Residues 38–60 (PGCYKITTVFSHAQTVVLCVGCS) form a C4-type zinc finger.

The protein belongs to the eukaryotic ribosomal protein eS27 family. The cofactor is Zn(2+).

The sequence is that of Small ribosomal subunit protein eS27-like (RPS27L) from Bos taurus (Bovine).